Here is a 229-residue protein sequence, read N- to C-terminus: Ras-related protein Rab-33B (229 aa).

Asparagine 43, valine 44, glycine 45, lysine 46, threonine 47, cysteine 48, threonine 62, and threonine 65 together coordinate GTP. Threonine 47 contributes to the Mg(2+) binding site. A Switch 1 motif is present at residues 56–68 (GRFPDRTEATIGV). Positions 65 and 88 each coordinate Mg(2+). The Switch 2 motif lies at 89-108 (TAGQERFRKSMVQHYYRNVH). Residues glycine 91, asparagine 148, lysine 149, aspartate 151, alanine 179, and lysine 180 each contribute to the GTP site. Residues cysteine 227 and cysteine 229 are each lipidated (S-geranylgeranyl cysteine). At cysteine 229 the chain carries Cysteine methyl ester.

This sequence belongs to the small GTPase superfamily. Rab family. As to quaternary structure, interacts (GTP- and GDP-bound forms) with ATG16L1; the complex consists of a tetramer where two RAB33B molecules bind independently one molecule of the ATG16L1 homodimer; the interaction promotes ATG12-ATG5-ATG16L1 complex recruitment to phagophores. Interacts with ATG16L2; however interaction is approximately hundred times lower than for ATG16L1. Interacts with RIC1 (via C-terminus domain); the interaction is direct with a preference for RAB33B-GTP. Interacts with RGP1. Mg(2+) serves as cofactor. Prenylated.

The protein localises to the golgi apparatus membrane. The protein resides in the golgi apparatus. It is found in the cis-Golgi network. It localises to the preautophagosomal structure membrane. It carries out the reaction GTP + H2O = GDP + phosphate + H(+). Its activity is regulated as follows. Regulated by guanine nucleotide exchange factors (GEFs) which promote the exchange of bound GDP for free GTP. Regulated by GTPase activating proteins (GAPs) such as SGSM2 which increase the GTP hydrolysis activity. Inhibited by GDP dissociation inhibitors (GDIs). Functionally, the small GTPases Rab are key regulators of intracellular membrane trafficking, from the formation of transport vesicles to their fusion with membranes. Rabs cycle between an inactive GDP-bound form and an active GTP-bound form that is able to recruit to membranes different sets of downstream effectors directly responsible for vesicle formation, movement, tethering and fusion. RAB33B acts, in coordination with RAB6A, to regulate intra-Golgi retrograde trafficking. Participates in autophagosome formation by recruiting the ATG12-ATG5-ATG16L1 complex to phagophores, probably in a nucleotide-independent manner. In Homo sapiens (Human), this protein is Ras-related protein Rab-33B.